We begin with the raw amino-acid sequence, 93 residues long: Acylphosphatase (93 aa).

The Acylphosphatase-like domain occupies 6–92 (RAHVWVGGKV…EGLTHFEVLR (87 aa)). Residues Arg-21 and Asn-39 contribute to the active site.

The protein belongs to the acylphosphatase family.

It catalyses the reaction an acyl phosphate + H2O = a carboxylate + phosphate + H(+). This chain is Acylphosphatase (acyP), found in Gloeobacter violaceus (strain ATCC 29082 / PCC 7421).